The following is a 399-amino-acid chain: PCI domain-containing protein 2 (399 aa).

Positions 210 to 391 constitute a PCI domain; it reads VTYKYYVGRK…QKLVVSKQNP (182 aa).

This sequence belongs to the CSN12 family.

The polypeptide is PCI domain-containing protein 2 (pcid2) (Danio rerio (Zebrafish)).